Here is a 307-residue protein sequence, read N- to C-terminus: Putative gluconeogenesis factor (307 aa).

Belongs to the gluconeogenesis factor family.

It is found in the cytoplasm. Functionally, required for morphogenesis under gluconeogenic growth conditions. The chain is Putative gluconeogenesis factor from Yersinia pestis.